Consider the following 529-residue polypeptide: G-protein coupled receptor 161 (529 aa).

Residues 1–30 (MSLNSSLSCRKELSNLTEEEGGEGGVIITQ) are Extracellular-facing. N-linked (GlcNAc...) asparagine glycosylation is found at Asn4 and Asn15. The chain crosses the membrane as a helical span at residues 31–51 (FIAIIVITIFVCLGNLVIVVT). The Cytoplasmic segment spans residues 52-64 (LYKKSYLLTLSNK). A helical membrane pass occupies residues 65 to 85 (FVFSLTLSNFLLSVLVLPFVV). Topologically, residues 86 to 101 (TSSIRREWIFGVVWCN) are extracellular. Cys100 and Cys178 are disulfide-bonded. A helical transmembrane segment spans residues 102 to 123 (FSALLYLLISSASMLTLGVIAI). The Cytoplasmic portion of the chain corresponds to 124 to 143 (DRYYAVLYPMVYPMKITGNR). The chain crosses the membrane as a helical span at residues 144–164 (AVMALVYIWLHSLIGCLPPLF). Residues 165-190 (GWSSVEFDEFKWMCVAAWHREPGYTA) lie on the Extracellular side of the membrane. A helical transmembrane segment spans residues 191–211 (FWQIWCALFPFLVMLVCYGFI). Residues 212–269 (FRVARVKARKVHCGTVVIVEEDAQRTGRKNSSTSTSSSGSRRNAFQGVVYSANQCKAL) lie on the Cytoplasmic side of the membrane. The helical transmembrane segment at 270-290 (ITILVVLGAFMVTWGPYMVVI) threads the bilayer. Over 291-306 (ASEALWGKSSVSPSLE) the chain is Extracellular. A helical transmembrane segment spans residues 307-327 (TWATWLSFASAVCHPLIYGLW). The Cytoplasmic segment spans residues 328–529 (NKTVRKELLG…EGDVLAAEQR (202 aa)).

This sequence belongs to the G-protein coupled receptor 1 family.

The protein localises to the cell projection. It is found in the cilium membrane. It localises to the cell membrane. Functionally, key negative regulator of Shh signaling, which promotes the processing of GLI3 into GLI3R during neural tube development. Recruited by TULP3 and the IFT-A complex to primary cilia and acts as a regulator of the PKA-dependent basal repression machinery in Shh signaling by increasing cAMP levels, leading to promote the PKA-dependent processing of GLI3 into GLI3R and repress the Shh signaling. In presence of SHH, it is removed from primary cilia and is internalized into recycling endosomes, preventing its activity and allowing activation of the Shh signaling. Its ligand is unknown. The chain is G-protein coupled receptor 161 (GPR161) from Homo sapiens (Human).